Reading from the N-terminus, the 328-residue chain is DNA-directed RNA polymerase subunit alpha (328 aa).

Residues 1 to 234 form an alpha N-terminal domain (alpha-NTD) region; it reads MQNSPTEYLK…GQLSVFADLE (234 aa). Residues 248–328 are alpha C-terminal domain (alpha-CTD); it reads VDPILLRPVD…NWPPAGLEKV (81 aa).

The protein belongs to the RNA polymerase alpha chain family. Homodimer. The RNAP catalytic core consists of 2 alpha, 1 beta, 1 beta' and 1 omega subunit. When a sigma factor is associated with the core the holoenzyme is formed, which can initiate transcription.

It carries out the reaction RNA(n) + a ribonucleoside 5'-triphosphate = RNA(n+1) + diphosphate. In terms of biological role, DNA-dependent RNA polymerase catalyzes the transcription of DNA into RNA using the four ribonucleoside triphosphates as substrates. This is DNA-directed RNA polymerase subunit alpha from Methylobacillus flagellatus (strain ATCC 51484 / DSM 6875 / VKM B-1610 / KT).